Consider the following 476-residue polypeptide: MGDLAAIILAAGKGTRMKSDLVKVMHPLAGAPMVAWPVEAARQAGTSRMVLVVGHQADTIREHFAGTEQVAFALQEEQLGTGHAVASAAAALDGFTGRVLILCGDVPLIRPETLRGMIDAHGATGAALTVLTTRLENPFGYGRIIRGFDGRVIRIVEEKDATPEERGRREVNAGIYCAEAAFLFDAVTRIGNDNAQGEYYLTDIVTMANEQGLRCTAHPVADPVEVMGVNDRAQLAEAGRFARQRINRELMLDGVTIVDPAATYIDRGAVVGRDTTVHPGVHLSGETRIGEGCTIEQGAVIKGSTLGNGCVVEPGAVIRSCRLGSHVMVKAGSVMEDAIIHDHTAIGPMAHLRPGTELMAHVKIGNFVETKKITMGEGSKASHLTYLGDASIGNNVNVGCGTITCNYDGVRKHRTVIEDDVFVGSDVQFVAPVTVGRNSLIAAGTTVTRDVPPDSLAIARAPQVNKDGWKLKQRDQ.

The segment at 1–232 (MGDLAAIILA…PVEVMGVNDR (232 aa)) is pyrophosphorylase. Residues 9-12 (LAAG), lysine 23, glutamine 75, and 80-81 (GT) contribute to the UDP-N-acetyl-alpha-D-glucosamine site. Residue aspartate 105 coordinates Mg(2+). Residues glycine 142, glutamate 157, asparagine 172, and asparagine 230 each coordinate UDP-N-acetyl-alpha-D-glucosamine. Asparagine 230 is a binding site for Mg(2+). The tract at residues 233-253 (AQLAEAGRFARQRINRELMLD) is linker. The tract at residues 254-476 (GVTIVDPAAT…DGWKLKQRDQ (223 aa)) is N-acetyltransferase. Residues arginine 353 and lysine 371 each coordinate UDP-N-acetyl-alpha-D-glucosamine. Catalysis depends on histidine 383, which acts as the Proton acceptor. UDP-N-acetyl-alpha-D-glucosamine-binding residues include tyrosine 386 and asparagine 397. Acetyl-CoA is bound by residues 406–407 (NY), serine 425, alanine 443, and arginine 460.

The protein in the N-terminal section; belongs to the N-acetylglucosamine-1-phosphate uridyltransferase family. This sequence in the C-terminal section; belongs to the transferase hexapeptide repeat family. In terms of assembly, homotrimer. Mg(2+) serves as cofactor.

Its subcellular location is the cytoplasm. The catalysed reaction is alpha-D-glucosamine 1-phosphate + acetyl-CoA = N-acetyl-alpha-D-glucosamine 1-phosphate + CoA + H(+). The enzyme catalyses N-acetyl-alpha-D-glucosamine 1-phosphate + UTP + H(+) = UDP-N-acetyl-alpha-D-glucosamine + diphosphate. It participates in nucleotide-sugar biosynthesis; UDP-N-acetyl-alpha-D-glucosamine biosynthesis; N-acetyl-alpha-D-glucosamine 1-phosphate from alpha-D-glucosamine 6-phosphate (route II): step 2/2. It functions in the pathway nucleotide-sugar biosynthesis; UDP-N-acetyl-alpha-D-glucosamine biosynthesis; UDP-N-acetyl-alpha-D-glucosamine from N-acetyl-alpha-D-glucosamine 1-phosphate: step 1/1. Its pathway is bacterial outer membrane biogenesis; LPS lipid A biosynthesis. Its function is as follows. Catalyzes the last two sequential reactions in the de novo biosynthetic pathway for UDP-N-acetylglucosamine (UDP-GlcNAc). The C-terminal domain catalyzes the transfer of acetyl group from acetyl coenzyme A to glucosamine-1-phosphate (GlcN-1-P) to produce N-acetylglucosamine-1-phosphate (GlcNAc-1-P), which is converted into UDP-GlcNAc by the transfer of uridine 5-monophosphate (from uridine 5-triphosphate), a reaction catalyzed by the N-terminal domain. This is Bifunctional protein GlmU from Geobacter metallireducens (strain ATCC 53774 / DSM 7210 / GS-15).